A 1584-amino-acid chain; its full sequence is Kinesin-like protein unc-104 (1584 aa).

In terms of domain architecture, Kinesin motor spans 3–347; the sequence is SVKVAVRVRP…LRYADRAKQI (345 aa). 93–100 contributes to the ATP binding site; the sequence is GQTGSGKS. The tract at residues 183 to 335 is microtubule-binding; that stretch reads VCSYHDICNL…PADINFDETL (153 aa). Coiled coils occupy residues 425–445, 598–652, and 777–797; these read EQKL…LRDM, IDLK…SYIS, and SIEK…TDAE. Residues 1366 to 1416 are disordered; sequence IPMNKDPPTGNKAQELSDESGSNSITSPVSDKSLIKSSRSSDLLCRQKSKS. The segment covering 1376–1394 has biased composition (polar residues); sequence NKAQELSDESGSNSITSPV. The segment covering 1395-1409 has biased composition (low complexity); it reads SDKSLIKSSRSSDLL. A PH domain is found at 1460 to 1558; it reads VVSKKGYMNF…WLYAINPLMA (99 aa).

It belongs to the TRAFAC class myosin-kinesin ATPase superfamily. Kinesin family. Unc-104 subfamily. In terms of assembly, interacts with casy-1. In terms of tissue distribution, expressed in nerve ring, amphid commissure and ventral nerve cord (at protein level).

Its subcellular location is the cytoplasm. The protein localises to the cytoskeleton. It is found in the cell projection. It localises to the axon. In terms of biological role, motor protein involved in microtubule-associated anterograde transport. Regulates the transport of synaptic vesicle precursors in the axon of DA motor neurons. Regulates the polarized sorting of axonal proteins. Essential for the transport of synaptic components during the synaptic remodeling of the DD motor neuron, probably downstream of cdk-5 and/or pct-1/cyy-1 complex. Required for the anterograde transport of neuropeptide-containing dense core vesicles along axons. Involved in necrotic cell death. This is Kinesin-like protein unc-104 (unc-104) from Caenorhabditis elegans.